The following is a 453-amino-acid chain: Kynureninase (453 aa).

Residues leucine 114, threonine 115, 142-145 (FPSD), aspartate 232, histidine 235, and tyrosine 257 contribute to the pyridoxal 5'-phosphate site. Position 258 is an N6-(pyridoxal phosphate)lysine (lysine 258). Tryptophan 286 contacts pyridoxal 5'-phosphate.

Belongs to the kynureninase family. As to quaternary structure, homodimer. Requires pyridoxal 5'-phosphate as cofactor.

It is found in the cytoplasm. It carries out the reaction L-kynurenine + H2O = anthranilate + L-alanine + H(+). It catalyses the reaction 3-hydroxy-L-kynurenine + H2O = 3-hydroxyanthranilate + L-alanine + H(+). Its pathway is amino-acid degradation; L-kynurenine degradation; L-alanine and anthranilate from L-kynurenine: step 1/1. It participates in cofactor biosynthesis; NAD(+) biosynthesis; quinolinate from L-kynurenine: step 2/3. Functionally, catalyzes the cleavage of L-kynurenine (L-Kyn) and L-3-hydroxykynurenine (L-3OHKyn) into anthranilic acid (AA) and 3-hydroxyanthranilic acid (3-OHAA), respectively. The sequence is that of Kynureninase from Cryptococcus neoformans var. neoformans serotype D (strain JEC21 / ATCC MYA-565) (Filobasidiella neoformans).